The sequence spans 427 residues: Synaptotagmin-A (427 aa).

At 1-57 (MKLTEAYHDALAALPATPPLPTAVANATEAAAGSEEGKQDGFSKVKVKEKFMNELNK) the chain is on the vesicular side. Residue N26 is glycosylated (N-linked (GlcNAc...) asparagine). Residues 58–84 (IPLPPWALVAIAIVAIILGLTCCFCIC) traverse the membrane as a helical segment. Over 85–427 (KKCLLKKKNK…EVDATLGMKK (343 aa)) the chain is Cytoplasmic. Positions 96 to 145 (KGKEKGGKNAMTMKDVKEMGKSGKEQALKDEDEDAETGLTTDGKEEEKED) are disordered. Positions 109–124 (KDVKEMGKSGKEQALK) are enriched in basic and acidic residues. The phospholipid binding stretch occupies residues 141–387 (EEKEDEKLGK…AIGKVFVGYN (247 aa)). C2 domains follow at residues 147-266 (KLGK…EEWR) and 278-411 (KLGD…AQWH). L177, D178, D184, D236, F237, D238, S241, K242, D244, D309, D315, D369, D371, and D377 together coordinate Ca(2+).

This sequence belongs to the synaptotagmin family. As to quaternary structure, homodimer or homotrimer (possible). Requires Ca(2+) as cofactor. As to expression, forebrain, cerebellum and neuroendocrine cells.

It is found in the cytoplasmic vesicle. Its subcellular location is the secretory vesicle. The protein resides in the synaptic vesicle membrane. It localises to the synapse. Functionally, may have a regulatory role in the membrane interactions during trafficking of synaptic vesicles at the active zone of the synapse. It binds acidic phospholipids with a specificity that requires the presence of both an acidic head group and a diacyl backbone. The protein is Synaptotagmin-A (P65-A) of Diplobatis ommata (Ocellated electric ray).